The chain runs to 376 residues: Mitogen-activated protein kinase 6 (376 aa).

One can recognise a Protein kinase domain in the interval A43–L329. Residues I49 to V57 and K72 contribute to the ATP site. The Proton acceptor role is filled by D169. A Phosphothreonine modification is found at T201. Residues T201 to Y203 carry the TXY motif. A Phosphotyrosine modification is found at Y203.

The protein belongs to the protein kinase superfamily. CMGC Ser/Thr protein kinase family. MAP kinase subfamily. Dually phosphorylated on Thr-201 and Tyr-203, which activates the enzyme.

The catalysed reaction is L-seryl-[protein] + ATP = O-phospho-L-seryl-[protein] + ADP + H(+). The enzyme catalyses L-threonyl-[protein] + ATP = O-phospho-L-threonyl-[protein] + ADP + H(+). Its activity is regulated as follows. Activated by threonine and tyrosine phosphorylation. This chain is Mitogen-activated protein kinase 6 (MPK6), found in Oryza sativa subsp. japonica (Rice).